The primary structure comprises 318 residues: Protein FdhE homolog (318 aa).

Belongs to the FdhE family.

The protein localises to the cytoplasm. Its function is as follows. Necessary for formate dehydrogenase activity. The sequence is that of Protein FdhE homolog from Pseudomonas putida (strain ATCC 47054 / DSM 6125 / CFBP 8728 / NCIMB 11950 / KT2440).